The sequence spans 800 residues: Phenylalanine--tRNA ligase beta subunit (800 aa).

One can recognise a tRNA-binding domain in the interval 39–154; the sequence is TKDIKNLVVG…ESQVPGTDAL (116 aa). The 76-residue stretch at 408 to 483 folds into the B5 domain; it reads AFITPIDITA…RIYGYDDIPS (76 aa). Residues Asp461, Asp467, Glu470, and Glu471 each coordinate Mg(2+). The FDX-ACB domain maps to 708-800; it reads PRFPGMSRDI…ALIEQGAVIR (93 aa).

The protein belongs to the phenylalanyl-tRNA synthetase beta subunit family. Type 1 subfamily. In terms of assembly, tetramer of two alpha and two beta subunits. The cofactor is Mg(2+).

The protein localises to the cytoplasm. It carries out the reaction tRNA(Phe) + L-phenylalanine + ATP = L-phenylalanyl-tRNA(Phe) + AMP + diphosphate + H(+). The chain is Phenylalanine--tRNA ligase beta subunit from Staphylococcus aureus (strain Mu50 / ATCC 700699).